Consider the following 142-residue polypeptide: MFQGASALTLDAKGRMSIPSRYRDALQTQAEGRVTITRHPDGCLLLFPRPEWEIFRDKVDKLPMNATWWKRIFLGNAMDVDMDGAGRVLVSPELRTAGGLAKEVTLLGMGRHFELWDAQTYTAKEQAAMAEGMPDALKDFTF.

2 SpoVT-AbrB domains span residues 5–51 (ASAL…PRPE) and 77–120 (AMDV…DAQT).

The protein belongs to the MraZ family. As to quaternary structure, forms oligomers.

It localises to the cytoplasm. The protein resides in the nucleoid. This is Transcriptional regulator MraZ from Paraburkholderia xenovorans (strain LB400).